An 86-amino-acid polypeptide reads, in one-letter code: RNA-binding protein Hfq (86 aa).

Residues 9 to 68 (DPYLNTLRKERVPVSIYLVNGIKLQGQIESFDQFVILLKNTVSQMVYKHAISTVVPSRPV) form the Sm domain. A disordered region spans residues 66–86 (RPVRLPSAGDSEQADAEPGNA).

This sequence belongs to the Hfq family. Homohexamer.

In terms of biological role, RNA chaperone that binds small regulatory RNA (sRNAs) and mRNAs to facilitate mRNA translational regulation in response to envelope stress, environmental stress and changes in metabolite concentrations. Also binds with high specificity to tRNAs. The polypeptide is RNA-binding protein Hfq (Ectopseudomonas mendocina (strain ymp) (Pseudomonas mendocina)).